Reading from the N-terminus, the 209-residue chain is dTTP/UTP pyrophosphatase (209 aa).

D88 acts as the Proton acceptor in catalysis.

The protein belongs to the Maf family. YhdE subfamily. A divalent metal cation serves as cofactor.

It is found in the cytoplasm. It catalyses the reaction dTTP + H2O = dTMP + diphosphate + H(+). The catalysed reaction is UTP + H2O = UMP + diphosphate + H(+). Functionally, nucleoside triphosphate pyrophosphatase that hydrolyzes dTTP and UTP. May have a dual role in cell division arrest and in preventing the incorporation of modified nucleotides into cellular nucleic acids. This Burkholderia mallei (strain ATCC 23344) protein is dTTP/UTP pyrophosphatase.